The sequence spans 399 residues: Elongation factor Tu (399 aa).

The region spanning 10–204 is the tr-type G domain; it reads KPHVNIGTIG…AVDASIPEPE (195 aa). The interval 19 to 26 is G1; sequence GHVDHGKT. 19-26 lines the GTP pocket; it reads GHVDHGKT. Threonine 26 contributes to the Mg(2+) binding site. The G2 stretch occupies residues 60 to 64; that stretch reads GITIN. The G3 stretch occupies residues 81-84; it reads DCPG. Residues 81-85 and 136-139 contribute to the GTP site; these read DCPGH and NKCD. The segment at 136–139 is G4; it reads NKCD. The G5 stretch occupies residues 174 to 176; the sequence is SGL.

Belongs to the TRAFAC class translation factor GTPase superfamily. Classic translation factor GTPase family. EF-Tu/EF-1A subfamily. In terms of assembly, monomer.

The protein localises to the cytoplasm. It carries out the reaction GTP + H2O = GDP + phosphate + H(+). Functionally, GTP hydrolase that promotes the GTP-dependent binding of aminoacyl-tRNA to the A-site of ribosomes during protein biosynthesis. This is Elongation factor Tu from Prochlorococcus marinus (strain MIT 9313).